Here is a 544-residue protein sequence, read N- to C-terminus: Protein anon-37Cs (544 aa).

Its subcellular location is the cytoplasm. Functionally, has a non-vital function. This Drosophila lebanonensis (Fruit fly) protein is Protein anon-37Cs (anon-37Cs).